Here is a 530-residue protein sequence, read N- to C-terminus: MARLCTHTESGHYLMALDAGTGSVRAVIFDLQGKQIAVDQAEWQHLAVPDVPGSMEFDLAKNWQLACQCIRQALQKAAIPATAIAAVSACSMREGIVIYDSNGEPIWACANVDARAAHEVSELKELHDNTFEEEVYRCSGQTLALSAIPRLLWLAHHRPDIYHRASTVTMISDWMAFMLSGELAVDPSNAGTTGLLDLVTRNWKRSLLQMAGLRSDILSPVKETGTLLGHISQKAAEQCDLQAGTPVIVGGGDVQLGCLGLGVVRPAQTAVLGGTFWQQVVNLPAPVTDPNMNVRINPHVIPGMVQTESISFFTGLTMRWFRDAFCAEEKLIAERLGIDAYSLLEDMASRVPPGAHGVMPIFSDVMRFKRWYHAAPSFINLSIDPEKCNKATLFRALEENAAIVSACNLQQIAAFSGVQADSLVFAGGGSKGKLWSQILADVTGLTVHVPVVKEATALGCAIAAGVGVGVWPSLAETGEKLVRWDREHKPNPENFAVYQQAREKWQAVYQDQRALVDGGLTTSLWKAPGL.

It belongs to the FGGY kinase family.

It is found in the cytoplasm. It carries out the reaction (S)-4,5-dihydroxypentane-2,3-dione + ATP = (2S)-2-hydroxy-3,4-dioxopentyl phosphate + ADP + H(+). Its function is as follows. Catalyzes the phosphorylation of autoinducer-2 (AI-2) to phospho-AI-2, which subsequently inactivates the transcriptional regulator LsrR and leads to the transcription of the lsr operon. Phosphorylates the ring-open form of (S)-4,5-dihydroxypentane-2,3-dione (DPD), which is the precursor to all AI-2 signaling molecules, at the C5 position. This Salmonella paratyphi A (strain ATCC 9150 / SARB42) protein is Autoinducer-2 kinase.